A 319-amino-acid polypeptide reads, in one-letter code: uncharacterized protein (319 aa).

Residues 21-70 (ETETLKNSTDEVQTSSSFSSSGGRQSSPLTSGSKLEREKQTPSLEQGDTQ) form a disordered region. Residues 25–34 (LKNSTDEVQT) are compositionally biased toward polar residues. Over residues 35–51 (SSSFSSSGGRQSSPLTS) the composition is skewed to low complexity. The segment covering 61 to 70 (TPSLEQGDTQ) has biased composition (polar residues).

This is an uncharacterized protein from Homo sapiens (Human).